The following is a 554-amino-acid chain: 5'-AMP-activated protein kinase catalytic subunit alpha-1 (554 aa).

The region spanning 22–274 is the Protein kinase domain; sequence YILGDTLGVG…IKDIREHEWF (253 aa). A Phosphothreonine modification is found at T27. Residues 28-36 and K51 contribute to the ATP site; that span reads LGVGTFGKV. D145 acts as the Proton acceptor in catalysis. T178 carries the phosphothreonine; by LKB1 and CaMKK2 modification. 2 positions are modified to phosphothreonine: T264 and T350. The interval 297–376 is AIS; the sequence is EALKEVCEKF…PERVPFLVAE (80 aa). S351 carries the phosphoserine modification. The residue at position 355 (S355) is a Phosphoserine; by ULK1. T363 bears the Phosphothreonine; by ULK1 mark. T377 carries the post-translational modification Phosphothreonine. Position 392 is a phosphoserine; by ULK1 (S392). The residue at position 462 (S462) is a Phosphoserine. Residues 480–500 show a composition bias toward polar residues; that stretch reads KSGTATPQRSGSVSNYRSCQR. Positions 480-531 are disordered; the sequence is KSGTATPQRSGSVSNYRSCQRSDSDAEAQGKSSEVSLTSSVTSLDSSPVDLT. S481 is subject to Phosphoserine; by ULK1. Residue T483 is modified to Phosphothreonine; by ULK1. Residue T485 is modified to Phosphothreonine. A phosphoserine mark is found at S491, S503, S519, and S522. Residues 511-530 show a composition bias toward low complexity; the sequence is SSEVSLTSSVTSLDSSPVDL.

This sequence belongs to the protein kinase superfamily. CAMK Ser/Thr protein kinase family. SNF1 subfamily. AMPK is a heterotrimer of an alpha catalytic subunit (PRKAA1 or PRKAA2), a beta (PRKAB1 or PRKAB2) and a gamma non-catalytic subunits (PRKAG1, PRKAG2 or PRKAG3). Interacts with FNIP1 and FNIP2. Mg(2+) is required as a cofactor. In terms of processing, ubiquitinated. Post-translationally, phosphorylated at Thr-183 by STK11/LKB1 in complex with STE20-related adapter-alpha (STRADA) pseudo kinase and CAB39. Also phosphorylated at Thr-183 by CAMKK2; triggered by a rise in intracellular calcium ions, without detectable changes in the AMP/ATP ratio. CAMKK1 can also phosphorylate Thr-183, but at a much lower level. Dephosphorylated by protein phosphatase 2A and 2C (PP2A and PP2C). Phosphorylated by ULK1 and ULK2; leading to negatively regulate AMPK activity and suggesting the existence of a regulatory feedback loop between ULK1, ULK2 and AMPK. Dephosphorylated by PPM1A and PPM1B. Glycosylated; O-GlcNAcylated by OGT, promoting the AMP-activated protein kinase (AMPK) activity.

The protein resides in the cytoplasm. It is found in the nucleus. The enzyme catalyses L-seryl-[protein] + ATP = O-phospho-L-seryl-[protein] + ADP + H(+). It catalyses the reaction L-threonyl-[protein] + ATP = O-phospho-L-threonyl-[protein] + ADP + H(+). The catalysed reaction is L-seryl-[acetyl-CoA carboxylase] + ATP = O-phospho-L-seryl-[acetyl-CoA carboxylase] + ADP + H(+). It carries out the reaction L-seryl-[3-hydroxy-3-methylglutaryl-coenzyme A reductase] + ATP = O-phospho-L-seryl-[3-hydroxy-3-methylglutaryl-coenzyme A reductase] + ADP + H(+). The enzyme catalyses L-seryl-[tau protein] + ATP = O-phospho-L-seryl-[tau protein] + ADP + H(+). It catalyses the reaction L-threonyl-[tau protein] + ATP = O-phospho-L-threonyl-[tau protein] + ADP + H(+). Activated by phosphorylation on Thr-183. Binding of AMP to non-catalytic gamma subunit (PRKAG1, PRKAG2 or PRKAG3) results in allosteric activation, inducing phosphorylation on Thr-183. AMP-binding to gamma subunit also sustains activity by preventing dephosphorylation of Thr-183. ADP also stimulates Thr-183 phosphorylation, without stimulating already phosphorylated AMPK. ATP promotes dephosphorylation of Thr-183, rendering the enzyme inactive. Under physiological conditions AMPK mainly exists in its inactive form in complex with ATP, which is much more abundant than AMP. Selectively inhibited by compound C (6-[4-(2-Piperidin-1-yl-ethoxy)-phenyl)]-3-pyridin-4-yl-pyyrazolo[1,5-a] pyrimidine. Activated by resveratrol, a natural polyphenol present in red wine, and S17834, a synthetic polyphenol. In terms of biological role, catalytic subunit of AMP-activated protein kinase (AMPK), an energy sensor protein kinase that plays a key role in regulating cellular energy metabolism. In response to reduction of intracellular ATP levels, AMPK activates energy-producing pathways and inhibits energy-consuming processes: inhibits protein, carbohydrate and lipid biosynthesis, as well as cell growth and proliferation. AMPK acts via direct phosphorylation of metabolic enzymes, and by longer-term effects via phosphorylation of transcription regulators. Regulates lipid synthesis by phosphorylating and inactivating lipid metabolic enzymes such as ACACA, ACACB, GYS1, HMGCR and LIPE; regulates fatty acid and cholesterol synthesis by phosphorylating acetyl-CoA carboxylase (ACACA and ACACB) and hormone-sensitive lipase (LIPE) enzymes, respectively. Promotes lipolysis of lipid droplets by mediating phosphorylation of isoform 1 of CHKA (CHKalpha2). Regulates insulin-signaling and glycolysis by phosphorylating IRS1, PFKFB2 and PFKFB3. AMPK stimulates glucose uptake in muscle by increasing the translocation of the glucose transporter SLC2A4/GLUT4 to the plasma membrane, possibly by mediating phosphorylation of TBC1D4/AS160. Regulates transcription and chromatin structure by phosphorylating transcription regulators involved in energy metabolism such as CRTC2/TORC2, FOXO3, histone H2B, HDAC5, MEF2C, MLXIPL/ChREBP, EP300, HNF4A, p53/TP53, SREBF1, SREBF2 and PPARGC1A. Acts as a key regulator of glucose homeostasis in liver by phosphorylating CRTC2/TORC2, leading to CRTC2/TORC2 sequestration in the cytoplasm. In response to stress, phosphorylates 'Ser-36' of histone H2B (H2BS36ph), leading to promote transcription. Acts as a key regulator of cell growth and proliferation by phosphorylating FNIP1, TSC2, RPTOR, WDR24 and ATG1/ULK1: in response to nutrient limitation, negatively regulates the mTORC1 complex by phosphorylating RPTOR component of the mTORC1 complex and by phosphorylating and activating TSC2. Also phosphorylates and inhibits GATOR2 subunit WDR24 in response to nutrient limitation, leading to suppress glucose-mediated mTORC1 activation. In response to energetic stress, phosphorylates FNIP1, inactivating the non-canonical mTORC1 signaling, thereby promoting nuclear translocation of TFEB and TFE3, and inducing transcription of lysosomal or autophagy genes. In response to nutrient limitation, promotes autophagy by phosphorylating and activating ATG1/ULK1. In that process also activates WDR45/WIPI4. Phosphorylates CASP6, thereby preventing its autoprocessing and subsequent activation. In response to nutrient limitation, phosphorylates transcription factor FOXO3 promoting FOXO3 mitochondrial import. Also acts as a regulator of cellular polarity by remodeling the actin cytoskeleton; probably by indirectly activating myosin. AMPK also acts as a regulator of circadian rhythm by mediating phosphorylation of CRY1, leading to destabilize it. May regulate the Wnt signaling pathway by phosphorylating CTNNB1, leading to stabilize it. Also has tau-protein kinase activity: in response to amyloid beta A4 protein (APP) exposure, activated by CAMKK2, leading to phosphorylation of MAPT/TAU; however the relevance of such data remains unclear in vivo. Also phosphorylates CFTR, EEF2K, KLC1, NOS3 and SLC12A1. Regulates hepatic lipogenesis. Activated via SIRT3, represses sterol regulatory element-binding protein (SREBP) transcriptional activities and ATP-consuming lipogenesis to restore cellular energy balance. Upon stress, regulates mitochondrial fragmentation through phosphorylation of MTFR1L. The polypeptide is 5'-AMP-activated protein kinase catalytic subunit alpha-1 (PRKAA1) (Pongo abelii (Sumatran orangutan)).